Here is a 718-residue protein sequence, read N- to C-terminus: Putative methyltransferase NSUN7 (718 aa).

The active-site Nucleophile is the cysteine 439. Disordered stretches follow at residues 536-557, 578-616, and 694-718; these read GKSSKREKKKKKSKTSLTKGAT, ANLSETVTKPPLPQKNTAQVGASSQTRKPNKLAPHPAVP, and SLSRKEEKPKDDTPSSLLRPPRRWL. The segment covering 538 to 549 has biased composition (basic residues); the sequence is SSKREKKKKKSK. Over residues 591-604 the composition is skewed to polar residues; sequence QKNTAQVGASSQTR. A compositionally biased stretch (basic and acidic residues) spans 696–706; the sequence is SRKEEKPKDDT.

It belongs to the class I-like SAM-binding methyltransferase superfamily. RsmB/NOP family.

Its function is as follows. May have S-adenosyl-L-methionine-dependent methyl-transferase activity. This chain is Putative methyltransferase NSUN7 (NSUN7), found in Homo sapiens (Human).